Consider the following 95-residue polypeptide: Probable FAD-linked sulfhydryl oxidase OPG072 (95 aa).

At 1 to 8 (MNPKHWGR) the chain is on the intravirion side. Positions 1 to 95 (MNPKHWGRAV…AIDVSKVKPL (95 aa)) constitute an ERV/ALR sulfhydryl oxidase domain. A helical membrane pass occupies residues 9 to 25 (AVWTIIFIVLSQAGLDG). The Virion surface segment spans residues 26 to 95 (NIEACKRKLY…AIDVSKVKPL (70 aa)). The cysteines at positions 43 and 46 are disulfide-linked.

It belongs to the orthopoxvirus OPG072 family. In terms of assembly, interacts with OPG128; this interaction involves formation of a transient disulfide-bonded intermediate, allowing disulfide bond transfer. Requires FAD as cofactor.

It is found in the virion membrane. It localises to the host cytoplasm. It carries out the reaction 2 R'C(R)SH + O2 = R'C(R)S-S(R)CR' + H2O2. Its function is as follows. FAD-dependent sulfhydryl oxidase that catalyzes disulfide bond formation. The complete pathway for formation of disulfide bonds in intracellular virion membrane proteins sequentially involves thiol-disulfide transfer between OPG072, OPG128 and OPG088. This Monkeypox virus protein is Probable FAD-linked sulfhydryl oxidase OPG072 (OPG072).